The following is a 131-amino-acid chain: Small ribosomal subunit protein uS8 (131 aa).

This sequence belongs to the universal ribosomal protein uS8 family. In terms of assembly, part of the 30S ribosomal subunit. Contacts proteins S5 and S12.

Its function is as follows. One of the primary rRNA binding proteins, it binds directly to 16S rRNA central domain where it helps coordinate assembly of the platform of the 30S subunit. The chain is Small ribosomal subunit protein uS8 from Legionella pneumophila (strain Paris).